Here is a 109-residue protein sequence, read N- to C-terminus: UPF0122 protein Cbei_1174 (109 aa).

The protein belongs to the UPF0122 family.

Might take part in the signal recognition particle (SRP) pathway. This is inferred from the conservation of its genetic proximity to ftsY/ffh. May be a regulatory protein. In Clostridium beijerinckii (strain ATCC 51743 / NCIMB 8052) (Clostridium acetobutylicum), this protein is UPF0122 protein Cbei_1174.